We begin with the raw amino-acid sequence, 376 residues long: Alanine racemase (376 aa).

The Proton acceptor; specific for D-alanine role is filled by K44. At K44 the chain carries N6-(pyridoxal phosphate)lysine. Residue R139 participates in substrate binding. Y271 acts as the Proton acceptor; specific for L-alanine in catalysis. Residue M319 participates in substrate binding.

The protein belongs to the alanine racemase family. The cofactor is pyridoxal 5'-phosphate.

The enzyme catalyses L-alanine = D-alanine. It participates in amino-acid biosynthesis; D-alanine biosynthesis; D-alanine from L-alanine: step 1/1. In terms of biological role, catalyzes the interconversion of L-alanine and D-alanine. May also act on other amino acids. This Bordetella petrii (strain ATCC BAA-461 / DSM 12804 / CCUG 43448) protein is Alanine racemase (alr).